The following is a 233-amino-acid chain: 3-dehydroquinate dehydratase (233 aa).

3-dehydroquinate is bound by residues 34–36 and R64; that span reads ELR. H118 serves as the catalytic Proton donor/acceptor. K145 serves as the catalytic Schiff-base intermediate with substrate. R185, S205, and Q209 together coordinate 3-dehydroquinate.

The protein belongs to the type-I 3-dehydroquinase family. As to quaternary structure, homodimer.

The enzyme catalyses 3-dehydroquinate = 3-dehydroshikimate + H2O. It functions in the pathway metabolic intermediate biosynthesis; chorismate biosynthesis; chorismate from D-erythrose 4-phosphate and phosphoenolpyruvate: step 3/7. Involved in the third step of the chorismate pathway, which leads to the biosynthesis of aromatic amino acids. Catalyzes the cis-dehydration of 3-dehydroquinate (DHQ) and introduces the first double bond of the aromatic ring to yield 3-dehydroshikimate. In Coxiella burnetii (strain CbuK_Q154) (Coxiella burnetii (strain Q154)), this protein is 3-dehydroquinate dehydratase.